The primary structure comprises 335 residues: MKIGVIGSGSFGTALGSLLADKGYEVTLWCRNDSQIESINRNHINNKHLPDFTLPEKLTASKDLRTVVQGKDMIVSSPPSHALTEILREIKEYLPEKVPIVSASKGIENGTLRLVSEIFESELPGKYHSYLSYLSGPSFAKEIIQKVPTIVSIASRSETTARKVQEIFSFLYFRTYWTPDVIGVEVGGSLKNVIALAAGVSDGLGFGQNTRAALITRGLNEITKIGLKLGADPMTFLGPSGMGDLILTCCGEQSRNRTVGFRLGKGETLEQILSGMNEVAEGIKTTQSAYELSQKLGIEMAITNEVYKMLYEDKNPKEVVKDLMKRDLKREGVLV.

Ser10, Phe11, Arg31, and Lys105 together coordinate NADPH. Lys105, Gly136, and Ser138 together coordinate sn-glycerol 3-phosphate. Ala140 contacts NADPH. Sn-glycerol 3-phosphate-binding residues include Lys191, Asp244, Ser254, Arg255, and Asn256. Lys191 acts as the Proton acceptor in catalysis. Residue Arg255 participates in NADPH binding. NADPH-binding residues include Val279 and Glu281.

The protein belongs to the NAD-dependent glycerol-3-phosphate dehydrogenase family.

It is found in the cytoplasm. It catalyses the reaction sn-glycerol 3-phosphate + NAD(+) = dihydroxyacetone phosphate + NADH + H(+). The catalysed reaction is sn-glycerol 3-phosphate + NADP(+) = dihydroxyacetone phosphate + NADPH + H(+). It functions in the pathway membrane lipid metabolism; glycerophospholipid metabolism. Catalyzes the reduction of the glycolytic intermediate dihydroxyacetone phosphate (DHAP) to sn-glycerol 3-phosphate (G3P), the key precursor for phospholipid synthesis. This is Glycerol-3-phosphate dehydrogenase [NAD(P)+] from Leptospira borgpetersenii serovar Hardjo-bovis (strain JB197).